Here is an 826-residue protein sequence, read N- to C-terminus: Copper-transporting ATPase 1 (826 aa).

HMA domains are found at residues A15–K80 and I82–R147. Cu cation contacts are provided by C26, C29, C93, and C96. 6 helical membrane passes run L172–F192, N209–F229, L246–G266, S270–G290, A429–F449, and F457–A477. The 4-aspartylphosphate intermediate role is filled by D514. Mg(2+) is bound by residues D713 and D717. 2 helical membrane passes run F772 to L792 and T795 to G815.

Belongs to the cation transport ATPase (P-type) (TC 3.A.3) family. Type IB subfamily.

It is found in the cell membrane. The catalysed reaction is Cu(2+)(in) + ATP + H2O = Cu(2+)(out) + ADP + phosphate + H(+). In terms of biological role, involved in copper transport. This chain is Copper-transporting ATPase 1 (actP1), found in Rhizobium meliloti (strain 1021) (Ensifer meliloti).